The following is a 439-amino-acid chain: GTPase Obg (439 aa).

The Obg domain maps to 1-159 (MAFVDQAQIE…RNLKLELKVL (159 aa)). The OBG-type G domain occupies 160–336 (ADVGLVGFPS…LMRLTADMLA (177 aa)). GTP contacts are provided by residues 166–173 (GFPSAGKS), 191–195 (FTTLS), 213–216 (DLPG), 283–286 (TKMD), and 317–319 (SSI). The Mg(2+) site is built by Ser173 and Thr193. Residues 338 to 357 (APAPESYRPETKNDTSEKSY) form a disordered region. The span at 344–354 (YRPETKNDTSE) shows a compositional bias: basic and acidic residues. The OCT domain occupies 358 to 439 (TFKPETHDFT…NSDFVFEFSE (82 aa)).

Belongs to the TRAFAC class OBG-HflX-like GTPase superfamily. OBG GTPase family. As to quaternary structure, monomer. Requires Mg(2+) as cofactor.

Its subcellular location is the cytoplasm. Its function is as follows. An essential GTPase which binds GTP, GDP and possibly (p)ppGpp with moderate affinity, with high nucleotide exchange rates and a fairly low GTP hydrolysis rate. Plays a role in control of the cell cycle, stress response, ribosome biogenesis and in those bacteria that undergo differentiation, in morphogenesis control. The sequence is that of GTPase Obg from Leuconostoc mesenteroides subsp. mesenteroides (strain ATCC 8293 / DSM 20343 / BCRC 11652 / CCM 1803 / JCM 6124 / NCDO 523 / NBRC 100496 / NCIMB 8023 / NCTC 12954 / NRRL B-1118 / 37Y).